The primary structure comprises 340 residues: Short-chain dehydrogenase/reductase ffsI (340 aa).

Leu46, Arg71, Asp96, Asn123, Tyr211, and Lys215 together coordinate NADP(+). Tyr211 serves as the catalytic Proton acceptor. Residue Lys215 is the Lowers pKa of active site Tyr of the active site.

The protein belongs to the short-chain dehydrogenases/reductases (SDR) family.

It functions in the pathway mycotoxin biosynthesis. Functionally, short-chain dehydrogenase/reductase; part of the gene cluster that mediates the biosynthesis of the cytotoxic leucine-containing cytochalasans, including aspochalasin C, aspochalasin E, TMC-169, flavichalasine F, aspergillin PZ, aspochalasin M and flavichalasine G. The first step in the pathway is catalyzed by the hybrid PKS-NRPS ffsA that utilizes 8 units of malonyl-CoA to iteratively assemble the octaketide chain before addition of L-leucine by the C-terminal NRPS modules. Because ffsA lacks a designated enoylreductase (ER) domain, the required activity is provided the enoyl reductase fssC. The methyltransferase (MT) domain of ffsA catalyzes the alpha-methylation at C10 and C14 using S-adenosyl-L-methionine as the methyl-donating cosubstrate. Reduction by the hydrolyase ffsE, followed by dehydration and intra-molecular Diels-Alder cyclization by the Diels-Alderase ffsF then yield the required isoindolone-fused macrocycle. A number of oxidative steps catalyzed by the tailoring cytochrome P450 monooxygenase ffsD, the FAD-linked oxidoreductase ffsJ and the short-chain dehydrogenase/reductase ffsI, are further required to afford the final products. The polypeptide is Short-chain dehydrogenase/reductase ffsI (Aspergillus flavipes).